The primary structure comprises 794 residues: MLTRNCLSLLLWVLFDGGLLTPLQPQPQQTLATEPRENVIHLPGQRSHFQRVKRGWVWNQFFVLEEYVGSEPQYVGKLHSDLDKGEGTVKYTLSGDGAGTVFTIDETTGDIHAIRSLDREEKPFYTLRAQAVDIETRKPLEPESEFIIKVQDINDNEPKFLDGPYVATVPEMSPVGAYVLQVKATDADDPTYGNSARVVYSILQGQPYFSIDPKTGVIRTALPNMDREVKEQYQVLIQAKDMGGQLGGLAGTTIVNITLTDVNDNPPRFPKSIFHLKVPESSPIGSAIGRIRAVDPDFGQNAEIEYNIVPGDGGNLFDIVTDEDTQEGVIKLKKPLDFETKKAYTFKVEASNLHLDHRFHSAGPFKDTATVKISVLDVDEPPVFSKPLYTMEVYEDTPVGTIIGAVTAQDLDVGSSAVRYFIDWKSDGDSYFTIDGNEGTIATNELLDRESTAQYNFSIIASKVSNPLLTSKVNILINVLDVNEFPPEISVPYETAVCENAKPGQIIQIVSAADRDLSPAGQQFSFRLSPEAAIKPNFTVRDFRNNTAGIETRRNGYSRRQQELYFLPVVIEDSSYPVQSSTNTMTIRVCRCDSDGTILSCNVEAIFLPVGLSTGALIAILLCIVILLAIVVLYVALRRQKKKDTLMTSKEDIRDNVIHYDDEGGGEEDTQAFDIGALRNPKVIEENKIRRDIKPDSLCLPRQRPPMEDNTDIRDFIHQRLQENDVDPTAPPYDSLATYAYEGSGSVAESLSSIDSLTTEADQDYDYLTDWGPRFKVLADMFGEEESYNPDKVT.

An N-terminal signal peptide occupies residues 1–23 (MLTRNCLSLLLWVLFDGGLLTPL). Residues 24–54 (QPQPQQTLATEPRENVIHLPGQRSHFQRVKR) constitute a propeptide that is removed on maturation. Cadherin domains lie at 55–160 (GWVW…EPKF), 161–269 (LDGP…PPRF), 270–384 (PKSI…PPVF), 385–487 (SKPL…EFPP), and 488–609 (EISV…IFLP). Topologically, residues 55–609 (GWVWNQFFVL…SCNVEAIFLP (555 aa)) are extracellular. Asn256 carries N-linked (GlcNAc...) asparagine glycosylation. N-linked (GlcNAc...) asparagine glycans are attached at residues Asn456, Asn537, and Asn545. The helical transmembrane segment at 610 to 637 (VGLSTGALIAILLCIVILLAIVVLYVAL) threads the bilayer. Topologically, residues 638–794 (RRQKKKDTLM…EESYNPDKVT (157 aa)) are cytoplasmic. At Ser787 the chain carries Phosphoserine.

As to expression, brain.

It is found in the cell membrane. Cadherins are calcium-dependent cell adhesion proteins. They preferentially interact with themselves in a homophilic manner in connecting cells; cadherins may thus contribute to the sorting of heterogeneous cell types. The sequence is that of Cadherin-12 (CDH12) from Homo sapiens (Human).